The sequence spans 1677 residues: Pentafunctional AROM polypeptide (1677 aa).

The 3-dehydroquinate synthase stretch occupies residues 1–394 (MAVADDTKAD…YEQKASIVED (394 aa)). NAD(+) contacts are provided by residues 50–52 (DDN), 89–92 (ETSK), 120–122 (GGV), and Asp125. Arg136 serves as a coordination point for 7-phospho-2-dehydro-3-deoxy-D-arabino-heptonate. NAD(+) is bound at residue 145-146 (TT). Positions 152 and 158 each coordinate 7-phospho-2-dehydro-3-deoxy-D-arabino-heptonate. Lys167 serves as a coordination point for NAD(+). Asn168 lines the 7-phospho-2-dehydro-3-deoxy-D-arabino-heptonate pocket. Residues 185-188 (YLET) and Asn196 each bind NAD(+). Glu200 contributes to the Zn(2+) binding site. Residues 200–203 (EVVK) and Lys260 contribute to the 7-phospho-2-dehydro-3-deoxy-D-arabino-heptonate site. Residue Glu270 is the Proton acceptor; for 3-dehydroquinate synthase activity of the active site. 7-phospho-2-dehydro-3-deoxy-D-arabino-heptonate contacts are provided by residues 274–278 (RNLVN) and His281. Residue His281 coordinates Zn(2+). Catalysis depends on His285, which acts as the Proton acceptor; for 3-dehydroquinate synthase activity. 7-phospho-2-dehydro-3-deoxy-D-arabino-heptonate is bound by residues His297 and Lys366. Position 297 (His297) interacts with Zn(2+). The segment at 407–858 (VVPSIPTGNV…WDDLENKIGI (452 aa)) is EPSP synthase. Residue Cys840 is the For EPSP synthase activity of the active site. Positions 885–1113 (NSSILLIGMR…GQQRRTYFLC (229 aa)) are shikimate kinase. 892–899 (GMRGTGKT) contributes to the ATP binding site. The 3-dehydroquinase stretch occupies residues 1114 to 1341 (LTYPDVRHAF…AAPGQLSFKQ (228 aa)). Catalysis depends on His1243, which acts as the Proton acceptor; for 3-dehydroquinate dehydratase activity. The active-site Schiff-base intermediate with substrate; for 3-dehydroquinate dehydratase activity is the Lys1271. The tract at residues 1354-1677 (SKHFHLFGTP…TRVWEKYGEV (324 aa)) is shikimate dehydrogenase.

This sequence in the N-terminal section; belongs to the sugar phosphate cyclases superfamily. Dehydroquinate synthase family. The protein in the 2nd section; belongs to the EPSP synthase family. It in the 3rd section; belongs to the shikimate kinase family. In the 4th section; belongs to the type-I 3-dehydroquinase family. This sequence in the C-terminal section; belongs to the shikimate dehydrogenase family. Homodimer. Requires Zn(2+) as cofactor.

The protein localises to the cytoplasm. It catalyses the reaction 7-phospho-2-dehydro-3-deoxy-D-arabino-heptonate = 3-dehydroquinate + phosphate. The catalysed reaction is 3-dehydroquinate = 3-dehydroshikimate + H2O. The enzyme catalyses shikimate + NADP(+) = 3-dehydroshikimate + NADPH + H(+). It carries out the reaction shikimate + ATP = 3-phosphoshikimate + ADP + H(+). It catalyses the reaction 3-phosphoshikimate + phosphoenolpyruvate = 5-O-(1-carboxyvinyl)-3-phosphoshikimate + phosphate. The protein operates within metabolic intermediate biosynthesis; chorismate biosynthesis; chorismate from D-erythrose 4-phosphate and phosphoenolpyruvate: step 2/7. It functions in the pathway metabolic intermediate biosynthesis; chorismate biosynthesis; chorismate from D-erythrose 4-phosphate and phosphoenolpyruvate: step 3/7. Its pathway is metabolic intermediate biosynthesis; chorismate biosynthesis; chorismate from D-erythrose 4-phosphate and phosphoenolpyruvate: step 4/7. It participates in metabolic intermediate biosynthesis; chorismate biosynthesis; chorismate from D-erythrose 4-phosphate and phosphoenolpyruvate: step 5/7. The protein operates within metabolic intermediate biosynthesis; chorismate biosynthesis; chorismate from D-erythrose 4-phosphate and phosphoenolpyruvate: step 6/7. Its function is as follows. The AROM polypeptide catalyzes 5 consecutive enzymatic reactions in prechorismate polyaromatic amino acid biosynthesis. This chain is Pentafunctional AROM polypeptide, found in Coprinopsis cinerea (strain Okayama-7 / 130 / ATCC MYA-4618 / FGSC 9003) (Inky cap fungus).